The chain runs to 142 residues: 3-hydroxyacyl-[acyl-carrier-protein] dehydratase FabZ (142 aa).

Histidine 48 is a catalytic residue.

This sequence belongs to the thioester dehydratase family. FabZ subfamily.

Its subcellular location is the cytoplasm. It catalyses the reaction a (3R)-hydroxyacyl-[ACP] = a (2E)-enoyl-[ACP] + H2O. Functionally, involved in unsaturated fatty acids biosynthesis. Catalyzes the dehydration of short chain beta-hydroxyacyl-ACPs and long chain saturated and unsaturated beta-hydroxyacyl-ACPs. The chain is 3-hydroxyacyl-[acyl-carrier-protein] dehydratase FabZ from Natranaerobius thermophilus (strain ATCC BAA-1301 / DSM 18059 / JW/NM-WN-LF).